Here is a 466-residue protein sequence, read N- to C-terminus: MAKRVAEKELTDRNWDEEDEVEEMGTFSVASEEVMKNRAVKKAKRRNVGFESDSGGAFKGFKGLVVPSGGGGFSGFGGSGGKPLEGLTNGNSTDNATPFSNVKTAAEPKAAFGSFAVNGPTTLVDKKISSPKCNNSNQPPSSGPASSTACPGNAYHKQLAGLNCSVRDWIVKHVNTNPLCDLTPIFKDYERYLATIEKQLENGGGSSSESQTDRATAGMEPPSLFGSTKLQQESPFSFHGNKAEDTSEKVEFTAEKKSDAAQGATSASFSFGKKIESSALGSLSSGSLTGFSFSAGSSSLFGKDAAQSKAASSLFSAKASESPAGGGSSECRDGEEEENDEPPKVVVTEVKEEDAFYSKKCKLFYKKDNEFKEKGVGTLHLKPTATQKTQLLVRADTNLGNILLNVLIAPNMPCTRTGKNNVLIVCVPNPPLDEKQPTLPATMLIRVKTSEDADELHKILLEKKDA.

Over residues 1-14 the composition is skewed to basic and acidic residues; the sequence is MAKRVAEKELTDRN. Residues 1 to 22 form a disordered region; that stretch reads MAKRVAEKELTDRNWDEEDEVE. At K8 the chain carries N6-acetyllysine. S52 bears the Phosphoserine mark. Residues 76 to 77 form repeat 1; that stretch reads FG. Positions 76-302 are 5 X 2 AA repeats of F-G; sequence FGGSGGKPLE…FSAGSSSLFG (227 aa). Residue K82 is modified to N6-acetyllysine. Copy 2 of the repeat occupies 112 to 113; sequence FG. The residue at position 126 (K126) is an N6-acetyllysine. 2 disordered regions span residues 128–150 and 200–257; these read ISSP…STAC and LENG…AEKK. A compositionally biased stretch (polar residues) spans 131-150; that stretch reads PKCNNSNQPPSSGPASSTAC. The binding to CDKN1B stretch occupies residues 143–205; it reads GPASSTACPG…IEKQLENGGG (63 aa). A Phosphoserine modification is found at S208. Residues 225–226 form repeat 3; the sequence is FG. Positions 225-235 are enriched in polar residues; sequence FGSTKLQQESP. S234 carries the post-translational modification Phosphoserine. Residues 241–257 are compositionally biased toward basic and acidic residues; it reads NKAEDTSEKVEFTAEKK. T246 carries the post-translational modification Phosphothreonine. Position 268 is a phosphoserine (S268). Repeat unit 4 spans residues 271 to 272; sequence FG. Phosphoserine is present on S294. Repeat 5 spans residues 301–302; sequence FG. The disordered stretch occupies residues 316 to 343; it reads SAKASESPAGGGSSECRDGEEEENDEPP. Residues 333-466 form the RanBD1 domain; that stretch reads DGEEEENDEP…HKILLEKKDA (134 aa). A Glycyl lysine isopeptide (Lys-Gly) (interchain with G-Cter in SUMO2) cross-link involves residue K351. K448 bears the N6-acetyllysine mark.

In terms of assembly, does not interact with TPR. Interacts with Importin alpha-2, Importin beta, Importin beta-2, NUP153, Ran binding protein 7, CDKN1B and itself. In terms of tissue distribution, widely expressed at low levels. Highest in the developing neural tube and adult testes.

It is found in the nucleus. It localises to the nuclear pore complex. Its subcellular location is the nucleus membrane. Functionally, component of the nuclear pore complex that has a direct role in nuclear protein import. Actively displaces NLSs from importin-alpha, and facilitates disassembly of the importin-alpha:beta-cargo complex and importin recycling. Interacts with regulatory proteins of cell cycle progression including CDKN1B. This interaction is required for correct intracellular transport and degradation of CDKN1B. The protein is Nuclear pore complex protein Nup50 (Nup50) of Mus musculus (Mouse).